Reading from the N-terminus, the 812-residue chain is Lon protease (812 aa).

In terms of domain architecture, Lon N-terminal spans 11-204 (IPVLPLRDVV…YLMAMMESEI (194 aa)). Residue 356 to 363 (GPPGVGKT) participates in ATP binding. The Lon proteolytic domain maps to 592–773 (ENRVGQVTGL…EEEQTLSLQN (182 aa)). Residues serine 679 and lysine 722 contribute to the active site. Basic and acidic residues predominate over residues 745 to 764 (KENPDNAKADQDRHPVKNNE). Residues 745-766 (KENPDNAKADQDRHPVKNNEEE) form a disordered region.

Belongs to the peptidase S16 family. As to quaternary structure, homohexamer. Organized in a ring with a central cavity. ATP binding and hydrolysis do not affect the oligomeric state of the enzyme.

It is found in the cytoplasm. The enzyme catalyses Hydrolysis of proteins in presence of ATP.. Contains an allosteric site (distinct from its active site), whose occupancy by an unfolded polypeptide leads to enzyme activation. In terms of biological role, ATP-dependent serine protease that mediates the selective degradation of mutant and abnormal proteins as well as certain short-lived regulatory proteins. Required for cellular homeostasis and for survival from DNA damage and developmental changes induced by stress. Degrades polypeptides processively to yield small peptide fragments that are 5 to 10 amino acids long. Binds to DNA in a double-stranded, site-specific manner. Endogenous substrates include the regulatory proteins RcsA and SulA, the transcriptional activator SoxS, and UmuD. Its overproduction specifically inhibits translation through at least two different pathways, one of them being the YoeB-YefM toxin-antitoxin system. This is Lon protease from Shigella dysenteriae serotype 1 (strain Sd197).